A 201-amino-acid polypeptide reads, in one-letter code: Adenylyl-sulfate kinase (201 aa).

35–42 (GLSGSGKS) serves as a coordination point for ATP. Catalysis depends on S109, which acts as the Phosphoserine intermediate.

The protein belongs to the APS kinase family.

The enzyme catalyses adenosine 5'-phosphosulfate + ATP = 3'-phosphoadenylyl sulfate + ADP + H(+). The protein operates within sulfur metabolism; hydrogen sulfide biosynthesis; sulfite from sulfate: step 2/3. Catalyzes the synthesis of activated sulfate. The protein is Adenylyl-sulfate kinase of Salmonella typhi.